The sequence spans 152 residues: Large ribosomal subunit protein bL9 (152 aa).

Residues 41-61 (QSAMSQLNAERKAEQRREAEE) are disordered. The segment covering 49–61 (AERKAEQRREAEE) has biased composition (basic and acidic residues).

It belongs to the bacterial ribosomal protein bL9 family.

Functionally, binds to the 23S rRNA. The polypeptide is Large ribosomal subunit protein bL9 (Levilactobacillus brevis (strain ATCC 367 / BCRC 12310 / CIP 105137 / JCM 1170 / LMG 11437 / NCIMB 947 / NCTC 947) (Lactobacillus brevis)).